The primary structure comprises 193 residues: dCTP deaminase, dUMP-forming (193 aa).

Residues 101–106 (KSSLGR), Asp119, 127–129 (TLE), Gln148, Tyr162, and Gln174 each bind dCTP. Glu129 functions as the Proton donor/acceptor in the catalytic mechanism. Residues 160–193 (TPYGSGSLGSKYQGQRGPTPSKGYLNFSSEQDSD) form a disordered region. The segment covering 167-177 (LGSKYQGQRGP) has biased composition (polar residues).

The protein belongs to the dCTP deaminase family. As to quaternary structure, homotrimer.

The catalysed reaction is dCTP + 2 H2O = dUMP + NH4(+) + diphosphate. It functions in the pathway pyrimidine metabolism; dUMP biosynthesis; dUMP from dCTP: step 1/1. Functionally, bifunctional enzyme that catalyzes both the deamination of dCTP to dUTP and the hydrolysis of dUTP to dUMP without releasing the toxic dUTP intermediate. The chain is dCTP deaminase, dUMP-forming from Corynebacterium efficiens (strain DSM 44549 / YS-314 / AJ 12310 / JCM 11189 / NBRC 100395).